Reading from the N-terminus, the 355-residue chain is Alkanal monooxygenase alpha chain (355 aa).

This sequence belongs to the bacterial luciferase oxidoreductase family. In terms of assembly, heterodimer of an alpha and a beta chain.

It catalyses the reaction a long-chain fatty aldehyde + FMNH2 + O2 = a long-chain fatty acid + hnu + FMN + H2O + 2 H(+). Its function is as follows. Light-emitting reaction in luminous bacteria. This is Alkanal monooxygenase alpha chain (luxA) from Vibrio harveyi (Beneckea harveyi).